The sequence spans 317 residues: Flavin-dependent thymidylate synthase (317 aa).

An FAD-binding site is contributed by S46. Residues 55-166 (FEWKKEKWIE…ELETDMDFYT (112 aa)) are insert. In terms of domain architecture, ThyX spans 100–317 (AVKERIKEAF…YRGTDKKNVI (218 aa)). Residues 178-181 (QWMR), 189-193 (EVSKR), and R259 each bind dUMP. Residues 181 to 183 (RHR) and E189 contribute to the FAD site. Residues 181–191 (RHRFGSYNEVS) carry the ThyX motif motif. N281 is an FAD binding site. R286 provides a ligand contact to dUMP. Catalysis depends on R286, which acts as the Involved in ionization of N3 of dUMP, leading to its activation.

This sequence belongs to the thymidylate synthase ThyX family. Homotetramer. FAD is required as a cofactor.

The catalysed reaction is dUMP + (6R)-5,10-methylene-5,6,7,8-tetrahydrofolate + NADPH + H(+) = dTMP + (6S)-5,6,7,8-tetrahydrofolate + NADP(+). It participates in pyrimidine metabolism; dTTP biosynthesis. Its function is as follows. Catalyzes the reductive methylation of 2'-deoxyuridine-5'-monophosphate (dUMP) to 2'-deoxythymidine-5'-monophosphate (dTMP) while utilizing 5,10-methylenetetrahydrofolate (mTHF) as the methyl donor, and NADPH and FADH(2) as the reductant. The sequence is that of Flavin-dependent thymidylate synthase from Aquifex aeolicus (strain VF5).